Here is a 296-residue protein sequence, read N- to C-terminus: ATP synthase gamma chain (296 aa).

Belongs to the ATPase gamma chain family. As to quaternary structure, F-type ATPases have 2 components, CF(1) - the catalytic core - and CF(0) - the membrane proton channel. CF(1) has five subunits: alpha(3), beta(3), gamma(1), delta(1), epsilon(1). CF(0) has three main subunits: a, b and c.

It localises to the cell inner membrane. In terms of biological role, produces ATP from ADP in the presence of a proton gradient across the membrane. The gamma chain is believed to be important in regulating ATPase activity and the flow of protons through the CF(0) complex. The chain is ATP synthase gamma chain from Gluconobacter oxydans (strain 621H) (Gluconobacter suboxydans).